A 332-amino-acid chain; its full sequence is MLLKEYRICMPLTVDEYKIGQLYMISKHSHEQSDRGEGVEVVQNEPFEDPHHGNGQFTEKRVYLNSKLPSWARAVVPKIFYVTEKAWNYYPYTITEYTCSFLPKFSIHIETKYEDNKGSNDTIFDNEAKDVEREVCFIDIACDEIPERYYKESEDPKHFKSEKTGRGQLREGWRDSHQPIMCSYKLVTVKFEVWGLQTRVEQFVHKVVRDILLIGHRQAFAWVDEWYDMTMDEVREFERATQEATNKKIGIFPPAISISSIPLLPSSVRSAPSSAPSTPLSTDAPEFLSVPKDRPRKKSAPETLTLPDPEKKATLNLPGMHSSDKPCRPKSE.

Ser119, Ser270, and Ser274 each carry phosphoserine. The segment covering 267–285 (SVRSAPSSAPSTPLSTDAP) has biased composition (low complexity). The segment at 267–332 (SVRSAPSSAP…SDKPCRPKSE (66 aa)) is disordered. Residue Thr278 is modified to Phosphothreonine. Residues 322 to 332 (SSDKPCRPKSE) show a composition bias toward basic and acidic residues.

It belongs to the PtdIns transfer protein family. PI transfer class IIB subfamily. As to expression, ubiquitously expressed.

It localises to the cytoplasm. It carries out the reaction a 1,2-diacyl-sn-glycero-3-phospho-(1D-myo-inositol)(in) = a 1,2-diacyl-sn-glycero-3-phospho-(1D-myo-inositol)(out). The enzyme catalyses a 1,2-diacyl-sn-glycero-3-phosphate(in) = a 1,2-diacyl-sn-glycero-3-phosphate(out). In terms of biological role, catalyzes the transfer of phosphatidylinositol (PI) and phosphatidic acid (PA) between membranes. Binds PA derived from the phospholipase D signaling pathway and among the cellular PA species, preferably binds to the C16:0/16:1 and C16:1/18:1 PA species. Its function is as follows. Catalyzes the transfer of phosphatidylinositol between membranes. In Homo sapiens (Human), this protein is Cytoplasmic phosphatidylinositol transfer protein 1 (PITPNC1).